A 129-amino-acid chain; its full sequence is Small ribosomal subunit protein uS11 (129 aa).

This sequence belongs to the universal ribosomal protein uS11 family. As to quaternary structure, part of the 30S ribosomal subunit. Interacts with proteins S7 and S18. Binds to IF-3.

Its function is as follows. Located on the platform of the 30S subunit, it bridges several disparate RNA helices of the 16S rRNA. Forms part of the Shine-Dalgarno cleft in the 70S ribosome. In Bradyrhizobium diazoefficiens (strain JCM 10833 / BCRC 13528 / IAM 13628 / NBRC 14792 / USDA 110), this protein is Small ribosomal subunit protein uS11.